We begin with the raw amino-acid sequence, 1358 residues long: DNA-directed RNA polymerase subunit beta (1358 aa).

Belongs to the RNA polymerase beta chain family. The RNAP catalytic core consists of 2 alpha, 1 beta, 1 beta' and 1 omega subunit. When a sigma factor is associated with the core the holoenzyme is formed, which can initiate transcription.

It catalyses the reaction RNA(n) + a ribonucleoside 5'-triphosphate = RNA(n+1) + diphosphate. In terms of biological role, DNA-dependent RNA polymerase catalyzes the transcription of DNA into RNA using the four ribonucleoside triphosphates as substrates. In Francisella tularensis subsp. tularensis (strain FSC 198), this protein is DNA-directed RNA polymerase subunit beta.